A 176-amino-acid chain; its full sequence is Retinol-binding protein 4-B (176 aa).

S1 is subject to N-acetylserine. 3 cysteine pairs are disulfide-bonded: C3–C159, C69–C173, and C119–C128. Residue Q97 participates in substrate binding.

The protein belongs to the calycin superfamily. Lipocalin family.

The protein localises to the secreted. RBP delivers retinol from the liver stores to the peripheral tissues. In plasma, the RBP-retinol complex interacts with transthyretin, this prevents its loss by filtration through the kidney glomeruli. The sequence is that of Retinol-binding protein 4-B (rbp4b) from Oncorhynchus mykiss (Rainbow trout).